A 1261-amino-acid polypeptide reads, in one-letter code: Pentatricopeptide repeat-containing protein 5, mitochondrial (1261 aa).

15 PPR repeats span residues 365–404, 405–442, 443–479, 480–514, 550–584, 806–849, 852–886, 887–924, 925–959, 960–995, 996–1031, 1032–1068, 1109–1143, 1144–1179, and 1180–1214; these read HPDL…TSMT, NVRS…NQVI, PSSI…TYKA, SPST…RFSD, TNFT…KVSL, HPEV…EKAN, MALI…GYIP, RAST…NVKP, SVFL…GLLP, TSVT…NYQP, RVAP…DIEP, SSHT…DVPI, DANL…NVSL, NAYI…MSGK, and EPST…RYPL. The interval 1225 to 1261 is disordered; it reads NSHMGQKPKRRSLNTSHSSLASLGNASTQHSINSSIN. The segment covering 1237-1261 has biased composition (polar residues); that stretch reads LNTSHSSLASLGNASTQHSINSSIN.

It is found in the mitochondrion. In terms of biological role, mitochondrial RNA-binding protein that acts as a general negative regulator of mitochondrial translation. This chain is Pentatricopeptide repeat-containing protein 5, mitochondrial (ppr5), found in Schizosaccharomyces pombe (strain 972 / ATCC 24843) (Fission yeast).